The chain runs to 246 residues: Enolase-phosphatase E1 (246 aa).

Mg(2+) is bound by residues Asp-11 and Glu-13. Substrate is bound by residues 140-141 and Lys-174; that span reads SS. A Mg(2+)-binding site is contributed by Asp-199.

The protein belongs to the HAD-like hydrolase superfamily. MasA/MtnC family. Monomer. Requires Mg(2+) as cofactor.

The protein resides in the cytoplasm. The protein localises to the nucleus. The enzyme catalyses 5-methylsulfanyl-2,3-dioxopentyl phosphate + H2O = 1,2-dihydroxy-5-(methylsulfanyl)pent-1-en-3-one + phosphate. It functions in the pathway amino-acid biosynthesis; L-methionine biosynthesis via salvage pathway; L-methionine from S-methyl-5-thio-alpha-D-ribose 1-phosphate: step 3/6. It participates in amino-acid biosynthesis; L-methionine biosynthesis via salvage pathway; L-methionine from S-methyl-5-thio-alpha-D-ribose 1-phosphate: step 4/6. Bifunctional enzyme that catalyzes the enolization of 2,3-diketo-5-methylthiopentyl-1-phosphate (DK-MTP-1-P) into the intermediate 2-hydroxy-3-keto-5-methylthiopentenyl-1-phosphate (HK-MTPenyl-1-P), which is then dephosphorylated to form the acireductone 1,2-dihydroxy-3-keto-5-methylthiopentene (DHK-MTPene). The protein is Enolase-phosphatase E1 of Acyrthosiphon pisum (Pea aphid).